The primary structure comprises 752 residues: Multifunctional tryptophan biosynthesis protein (752 aa).

The 200-residue stretch at 3 to 202 (FTLLIDNYDS…IQMKGGKWGG (200 aa)) folds into the Glutamine amidotransferase type-1 domain. 58–60 (GPG) is an L-glutamine binding site. Cys86 serves as the catalytic Nucleophile; for GATase activity. Residue 136 to 137 (SL) coordinates L-glutamine. Active-site for GATase activity residues include His176 and Glu178. Residues 231–495 (ILNRIHAQRL…DTKAFLRSLI (265 aa)) are indole-3-glycerol phosphate synthase. Positions 509 to 752 (LVKICGIRST…VEAFVKAVRG (244 aa)) are N-(5'-phosphoribosyl)anthranilate isomerase.

The enzyme catalyses N-(5-phospho-beta-D-ribosyl)anthranilate = 1-(2-carboxyphenylamino)-1-deoxy-D-ribulose 5-phosphate. It catalyses the reaction 1-(2-carboxyphenylamino)-1-deoxy-D-ribulose 5-phosphate + H(+) = (1S,2R)-1-C-(indol-3-yl)glycerol 3-phosphate + CO2 + H2O. It carries out the reaction chorismate + L-glutamine = anthranilate + pyruvate + L-glutamate + H(+). Its pathway is amino-acid biosynthesis; L-tryptophan biosynthesis; L-tryptophan from chorismate: step 1/5. It functions in the pathway amino-acid biosynthesis; L-tryptophan biosynthesis; L-tryptophan from chorismate: step 3/5. It participates in amino-acid biosynthesis; L-tryptophan biosynthesis; L-tryptophan from chorismate: step 4/5. Its function is as follows. Trifunctional enzyme bearing the Gln amidotransferase (GATase) domain of anthranilate synthase, indole-glycerolphosphate synthase, and phosphoribosylanthranilate isomerase activities. This chain is Multifunctional tryptophan biosynthesis protein (TRP1), found in Cryptococcus neoformans var. neoformans serotype D (strain B-3501A) (Filobasidiella neoformans).